Consider the following 555-residue polypeptide: F-box protein COS111 (555 aa).

Disordered regions lie at residues 31–82 and 124–147; these read MSVS…SVSN and DHSI…KQHH. Over residues 32–42 the composition is skewed to low complexity; it reads SVSSRSSQEES. Residues 48–61 show a composition bias toward polar residues; that stretch reads ESVSSLSMQEQQTE. A compositionally biased stretch (low complexity) spans 129–142; that stretch reads SGVTRSTVSTVRPT. The F-box domain maps to 196–246; sequence HKDLNSLPHEIMSKIVSHLDQRDVTMCLYVNKNMYSTAVRQLYKEPFFSST. Residues 327–346 show a composition bias toward low complexity; it reads SSSSLSCSRTSSNSNSSTES. The tract at residues 327-354 is disordered; the sequence is SSSSLSCSRTSSNSNSSTESKPVKKRRS.

F-box protein probably involved in ubiquitin conjugation pathway. This chain is F-box protein COS111 (COS111), found in Yarrowia lipolytica (strain CLIB 122 / E 150) (Yeast).